The chain runs to 129 residues: MSTIPTDLKFASSHEWVRKEDDGSYTVGITEHAQELLGDMVFVELPEVGDSVSAGAECAVAESVKAASDIYAPISGEVVAVNSSLEDSPELVNSDAYGDGWFFRIMPSDESEVDALLDAEGYQDVIDEA.

Positions 24–106 (SYTVGITEHA…YGDGWFFRIM (83 aa)) constitute a Lipoyl-binding domain. Lysine 65 carries the post-translational modification N6-lipoyllysine.

This sequence belongs to the GcvH family. In terms of assembly, the glycine cleavage system is composed of four proteins: P, T, L and H. It depends on (R)-lipoate as a cofactor.

The glycine cleavage system catalyzes the degradation of glycine. The H protein shuttles the methylamine group of glycine from the P protein to the T protein. In Shewanella denitrificans (strain OS217 / ATCC BAA-1090 / DSM 15013), this protein is Glycine cleavage system H protein.